The chain runs to 887 residues: Alanine--tRNA ligase (887 aa).

H581, H585, C683, and H687 together coordinate Zn(2+).

The protein belongs to the class-II aminoacyl-tRNA synthetase family. It depends on Zn(2+) as a cofactor.

It localises to the cytoplasm. The enzyme catalyses tRNA(Ala) + L-alanine + ATP = L-alanyl-tRNA(Ala) + AMP + diphosphate. In terms of biological role, catalyzes the attachment of alanine to tRNA(Ala) in a two-step reaction: alanine is first activated by ATP to form Ala-AMP and then transferred to the acceptor end of tRNA(Ala). Also edits incorrectly charged Ser-tRNA(Ala) and Gly-tRNA(Ala) via its editing domain. This is Alanine--tRNA ligase from Ehrlichia canis (strain Jake).